The chain runs to 376 residues: 4-hydroxy-3-methylbut-2-enyl diphosphate reductase (376 aa).

A [4Fe-4S] cluster-binding site is contributed by Cys19. Residues His48 and His99 each contribute to the (2E)-4-hydroxy-3-methylbut-2-enyl diphosphate site. His48 and His99 together coordinate dimethylallyl diphosphate. Residues His48 and His99 each coordinate isopentenyl diphosphate. Cys121 is a binding site for [4Fe-4S] cluster. His149 is a binding site for (2E)-4-hydroxy-3-methylbut-2-enyl diphosphate. His149 provides a ligand contact to dimethylallyl diphosphate. His149 serves as a coordination point for isopentenyl diphosphate. Residue Glu151 is the Proton donor of the active site. Position 208 (Thr208) interacts with (2E)-4-hydroxy-3-methylbut-2-enyl diphosphate. Position 236 (Cys236) interacts with [4Fe-4S] cluster. The (2E)-4-hydroxy-3-methylbut-2-enyl diphosphate site is built by Ser264, Asn266, and Ser307. Residues Ser264, Asn266, and Ser307 each coordinate dimethylallyl diphosphate. Ser264, Asn266, and Ser307 together coordinate isopentenyl diphosphate.

It belongs to the IspH family. The cofactor is [4Fe-4S] cluster.

It carries out the reaction isopentenyl diphosphate + 2 oxidized [2Fe-2S]-[ferredoxin] + H2O = (2E)-4-hydroxy-3-methylbut-2-enyl diphosphate + 2 reduced [2Fe-2S]-[ferredoxin] + 2 H(+). The catalysed reaction is dimethylallyl diphosphate + 2 oxidized [2Fe-2S]-[ferredoxin] + H2O = (2E)-4-hydroxy-3-methylbut-2-enyl diphosphate + 2 reduced [2Fe-2S]-[ferredoxin] + 2 H(+). It functions in the pathway isoprenoid biosynthesis; dimethylallyl diphosphate biosynthesis; dimethylallyl diphosphate from (2E)-4-hydroxy-3-methylbutenyl diphosphate: step 1/1. Its pathway is isoprenoid biosynthesis; isopentenyl diphosphate biosynthesis via DXP pathway; isopentenyl diphosphate from 1-deoxy-D-xylulose 5-phosphate: step 6/6. In terms of biological role, catalyzes the conversion of 1-hydroxy-2-methyl-2-(E)-butenyl 4-diphosphate (HMBPP) into a mixture of isopentenyl diphosphate (IPP) and dimethylallyl diphosphate (DMAPP). Acts in the terminal step of the DOXP/MEP pathway for isoprenoid precursor biosynthesis. This chain is 4-hydroxy-3-methylbut-2-enyl diphosphate reductase, found in Treponema pallidum (strain Nichols).